The chain runs to 113 residues: Endoribonuclease SymE (113 aa).

Positions 29 to 74 (SRYPDYSRIPAITLKGQWLEAAGFATGTAIDVKVMEGCIVLTAQPP) constitute a SpoVT-AbrB domain.

Belongs to the SymE family.

Its subcellular location is the cytoplasm. In terms of biological role, involved in the degradation and recycling of damaged RNA. It is itself a target for degradation by the ATP-dependent protease Lon. This is Endoribonuclease SymE from Escherichia coli O1:K1 / APEC.